We begin with the raw amino-acid sequence, 352 residues long: tRNA pseudouridine synthase D (352 aa).

D81 acts as the Nucleophile in catalysis. Residues 157–303 (GVPNYFGAQR…MDHERRILRL (147 aa)) form the TRUD domain.

Belongs to the pseudouridine synthase TruD family.

The enzyme catalyses uridine(13) in tRNA = pseudouridine(13) in tRNA. In terms of biological role, responsible for synthesis of pseudouridine from uracil-13 in transfer RNAs. This Pseudomonas entomophila (strain L48) protein is tRNA pseudouridine synthase D.